The sequence spans 188 residues: Putative lipoprotein LprB (188 aa).

A signal peptide spans M1–G27. The N-palmitoyl cysteine moiety is linked to residue C28. C28 carries S-diacylglycerol cysteine lipidation.

The protein localises to the cell membrane. This Mycobacterium leprae (strain TN) protein is Putative lipoprotein LprB (lprB).